The primary structure comprises 524 residues: Strychnine-10-hydroxylase (524 aa).

A helical transmembrane segment spans residues 6-26 (LYIHTAILGLISLFLILHFVF). Cys466 provides a ligand contact to heme.

The protein belongs to the cytochrome P450 family. Heme serves as cofactor.

It is found in the membrane. It carries out the reaction strychnine + reduced [NADPH--hemoprotein reductase] + O2 = 10-hydroxystrychnine + oxidized [NADPH--hemoprotein reductase] + H2O + H(+). It functions in the pathway alkaloid biosynthesis. Monooxygenase involved in the biosynthesis of curare monoterpene indole alkaloids (MIAs), natural products such as strychnine, a neurotoxic compound used as a pesticide to control rodents, and its pharmacologically active derivatives, including brucine, used to regulate blood pressure. Curare alkaloids act as animal glycine receptor antagonists. Catalyzes the conversion of strychnine to 10-OH strychnine. The protein is Strychnine-10-hydroxylase of Strychnos nux-vomica (Poison nut).